Reading from the N-terminus, the 284-residue chain is Serine protease 57 (284 aa).

Residues 1 to 35 form the signal peptide; the sequence is MPSSTAMVPGTRGGWHCLVLTTAAALTQLMWLPGC. One can recognise a Peptidase S1 domain in the interval 40–269; the sequence is IVGGHEVTPH…FVTWIWDVVR (230 aa). Cysteines 65 and 81 form a disulfide. Residues His80 and Asp128 each act as charge relay system in the active site. Asn135 carries an N-linked (GlcNAc...) asparagine glycan. Disulfide bonds link Cys163/Cys230, Cys194/Cys208, and Cys220/Cys245. Ser224 serves as the catalytic Charge relay system.

Belongs to the peptidase S1 family. In terms of processing, after cleavage of the signal peptide, the N-terminus is probably further processed by CTSC. Processing by CTSC is probably required for accumulation in cytoplasmic granules; in the absence of CTSC the protein does not accumulate. N-glycosylated.

The protein localises to the cytoplasmic granule lumen. It is found in the secreted. Serine protease that cleaves preferentially after Arg residues. Can also cleave after citrulline (deimidated arginine) and methylarginine residues. The sequence is that of Serine protease 57 (Prss57) from Mus musculus (Mouse).